A 413-amino-acid polypeptide reads, in one-letter code: Gamma-glutamyl phosphate reductase (413 aa).

Belongs to the gamma-glutamyl phosphate reductase family.

It localises to the cytoplasm. The enzyme catalyses L-glutamate 5-semialdehyde + phosphate + NADP(+) = L-glutamyl 5-phosphate + NADPH + H(+). The protein operates within amino-acid biosynthesis; L-proline biosynthesis; L-glutamate 5-semialdehyde from L-glutamate: step 2/2. Its function is as follows. Catalyzes the NADPH-dependent reduction of L-glutamate 5-phosphate into L-glutamate 5-semialdehyde and phosphate. The product spontaneously undergoes cyclization to form 1-pyrroline-5-carboxylate. This Leuconostoc mesenteroides subsp. mesenteroides (strain ATCC 8293 / DSM 20343 / BCRC 11652 / CCM 1803 / JCM 6124 / NCDO 523 / NBRC 100496 / NCIMB 8023 / NCTC 12954 / NRRL B-1118 / 37Y) protein is Gamma-glutamyl phosphate reductase.